A 222-amino-acid chain; its full sequence is GTP cyclohydrolase 1 (222 aa).

Positions 111, 114, and 182 each coordinate Zn(2+).

This sequence belongs to the GTP cyclohydrolase I family. In terms of assembly, toroid-shaped homodecamer, composed of two pentamers of five dimers.

The catalysed reaction is GTP + H2O = 7,8-dihydroneopterin 3'-triphosphate + formate + H(+). The protein operates within cofactor biosynthesis; 7,8-dihydroneopterin triphosphate biosynthesis; 7,8-dihydroneopterin triphosphate from GTP: step 1/1. This chain is GTP cyclohydrolase 1, found in Salmonella choleraesuis (strain SC-B67).